The primary structure comprises 338 residues: Nucleoid-associated protein HI_0839 (338 aa).

Belongs to the YejK family.

The protein localises to the cytoplasm. It is found in the nucleoid. The polypeptide is Nucleoid-associated protein HI_0839 (Haemophilus influenzae (strain ATCC 51907 / DSM 11121 / KW20 / Rd)).